An 827-amino-acid polypeptide reads, in one-letter code: Transcription factor SOX-6 (827 aa).

Positions 1–10 are enriched in polar residues; the sequence is MSSKQATSPF. Residues 1 to 51 form a disordered region; sequence MSSKQATSPFACTADGEEAMTQDLTSREKEEGSDQHPASHLPLHPIMHNKP. Basic and acidic residues predominate over residues 25–34; the sequence is TSREKEEGSD. At T119 the chain carries Phosphothreonine. A coiled-coil region spans residues 184-262; the sequence is LAEKERQLST…LLQQQIQVQG (79 aa). Disordered stretches follow at residues 334 to 361 and 379 to 470; these read QINP…GHSY and VSPG…PIGG. The span at 341-357 shows a compositional bias: basic and acidic residues; it reads GISDRFGRNLDPSEHGG. Residue S399 is modified to Phosphoserine. T401 is subject to Phosphothreonine. Residues K404 and K417 each participate in a glycyl lysine isopeptide (Lys-Gly) (interchain with G-Cter in SUMO) cross-link. Polar residues-rich tracts occupy residues 421–431 and 439–461; these read TAQPLNLSSRP and SPTS…LPNK. Phosphoserine occurs at positions 439 and 442. The segment at residues 620 to 688 is a DNA-binding region (HMG box); sequence IKRPMNAFMV…IHLEKYPNYK (69 aa). Disordered regions lie at residues 752–772 and 786–827; these read TPSP…EPSL and ASLA…VSAN. The span at 795 to 808 shows a compositional bias: acidic residues; it reads NGEDEMEAYDDYED.

Homodimer. Interacts with DAZAP2. May interact with CENPK. Post-translationally, sumoylation inhibits the transcriptional activity. Highly expressed in testis.

Its subcellular location is the nucleus. It localises to the cytoplasm. Functionally, transcription factor that plays a key role in several developmental processes, including neurogenesis, chondrocytes differentiation and cartilage formation. Specifically binds the 5'-AACAAT-3' DNA motif present in enhancers and super-enhancers and promotes expression of genes important for chondrogenesis. Required for overt chondrogenesis when condensed prechondrocytes differentiate into early stage chondrocytes: SOX5 and SOX6 cooperatively bind with SOX9 on active enhancers and super-enhancers associated with cartilage-specific genes, and thereby potentiate SOX9's ability to transactivate. Not involved in precartilaginous condensation, the first step in chondrogenesis, during which skeletal progenitors differentiate into prechondrocytes. Together with SOX5, required to form and maintain a pool of highly proliferating chondroblasts between epiphyses and metaphyses, to form columnar chondroblasts, delay chondrocyte prehypertrophy but promote hypertrophy, and to delay terminal differentiation of chondrocytes on contact with ossification fronts. Binds to the proximal promoter region of the myelin protein MPZ gene, and is thereby involved in the differentiation of oligodendroglia in the developing spinal tube. Binds to the gene promoter of MBP and acts as a transcriptional repressor. The protein is Transcription factor SOX-6 of Mus musculus (Mouse).